The following is a 465-amino-acid chain: Cerebellar degeneration-related protein 2-like (465 aa).

2 coiled-coil regions span residues 38 to 143 (LLER…EQLR) and 188 to 265 (LEQE…TYLL). The tract at residues 282–314 (APEADDPQPGRGDDLGAQDGVSSPAASPGHVVR) is disordered. A phosphoserine mark is found at Ser-308, Ser-318, and Ser-344. The stretch at 350-377 (MSILREVDEQYHALLEKYEELLSKCRQH) forms a coiled coil. Residues 382–417 (RHAGVQTSRPISRDSSWRDLRGGEEGQGEVKAGEKS) are disordered. Over residues 392-405 (ISRDSSWRDLRGGE) the composition is skewed to basic and acidic residues.

This sequence belongs to the CDR2 family.

The sequence is that of Cerebellar degeneration-related protein 2-like (CDR2L) from Homo sapiens (Human).